We begin with the raw amino-acid sequence, 211 residues long: N-(5'-phosphoribosyl)anthranilate isomerase (211 aa).

Belongs to the TrpF family.

It catalyses the reaction N-(5-phospho-beta-D-ribosyl)anthranilate = 1-(2-carboxyphenylamino)-1-deoxy-D-ribulose 5-phosphate. Its pathway is amino-acid biosynthesis; L-tryptophan biosynthesis; L-tryptophan from chorismate: step 3/5. The polypeptide is N-(5'-phosphoribosyl)anthranilate isomerase (Nitrosomonas europaea (strain ATCC 19718 / CIP 103999 / KCTC 2705 / NBRC 14298)).